The sequence spans 110 residues: Large ribosomal subunit protein uL22 (110 aa).

It belongs to the universal ribosomal protein uL22 family. As to quaternary structure, part of the 50S ribosomal subunit.

In terms of biological role, this protein binds specifically to 23S rRNA; its binding is stimulated by other ribosomal proteins, e.g. L4, L17, and L20. It is important during the early stages of 50S assembly. It makes multiple contacts with different domains of the 23S rRNA in the assembled 50S subunit and ribosome. Functionally, the globular domain of the protein is located near the polypeptide exit tunnel on the outside of the subunit, while an extended beta-hairpin is found that lines the wall of the exit tunnel in the center of the 70S ribosome. This chain is Large ribosomal subunit protein uL22, found in Citrobacter koseri (strain ATCC BAA-895 / CDC 4225-83 / SGSC4696).